A 792-amino-acid chain; its full sequence is Phenylalanine--tRNA ligase beta subunit (792 aa).

The region spanning 39–147 is the tRNA-binding domain; that stretch reads GESLGQVVVA…DDAPVGQALA (109 aa). One can recognise a B5 domain in the interval 400–475; the sequence is PQPARILLRR…RIHGYDRVPT (76 aa). Asp-453, Asp-459, Glu-462, and Asp-463 together coordinate Mg(2+). Positions 698-791 constitute an FDX-ACB domain; sequence SRFPSVRRDL…IEREHRARIR (94 aa).

This sequence belongs to the phenylalanyl-tRNA synthetase beta subunit family. Type 1 subfamily. In terms of assembly, tetramer of two alpha and two beta subunits. Requires Mg(2+) as cofactor.

It is found in the cytoplasm. The catalysed reaction is tRNA(Phe) + L-phenylalanine + ATP = L-phenylalanyl-tRNA(Phe) + AMP + diphosphate + H(+). The sequence is that of Phenylalanine--tRNA ligase beta subunit from Xanthomonas oryzae pv. oryzae (strain MAFF 311018).